Reading from the N-terminus, the 274-residue chain is Dermonecrotic toxin SdSicTox-betaIIB1biv (274 aa).

The active site involves H5. E25 and D27 together coordinate Mg(2+). Residue H41 is the Nucleophile of the active site. Disulfide bonds link C45/C51 and C47/C190. D85 lines the Mg(2+) pocket.

The protein belongs to the arthropod phospholipase D family. Class II subfamily. Mg(2+) serves as cofactor. Expressed by the venom gland.

The protein localises to the secreted. The enzyme catalyses an N-(acyl)-sphingosylphosphocholine = an N-(acyl)-sphingosyl-1,3-cyclic phosphate + choline. It carries out the reaction an N-(acyl)-sphingosylphosphoethanolamine = an N-(acyl)-sphingosyl-1,3-cyclic phosphate + ethanolamine. It catalyses the reaction a 1-acyl-sn-glycero-3-phosphocholine = a 1-acyl-sn-glycero-2,3-cyclic phosphate + choline. The catalysed reaction is a 1-acyl-sn-glycero-3-phosphoethanolamine = a 1-acyl-sn-glycero-2,3-cyclic phosphate + ethanolamine. Functionally, dermonecrotic toxins cleave the phosphodiester linkage between the phosphate and headgroup of certain phospholipids (sphingolipid and lysolipid substrates), forming an alcohol (often choline) and a cyclic phosphate. This toxin acts on sphingomyelin (SM). It may also act on ceramide phosphoethanolamine (CPE), lysophosphatidylcholine (LPC) and lysophosphatidylethanolamine (LPE), but not on lysophosphatidylserine (LPS), and lysophosphatidylglycerol (LPG). It acts by transphosphatidylation, releasing exclusively cyclic phosphate products as second products. Induces dermonecrosis, hemolysis, increased vascular permeability, edema, inflammatory response, and platelet aggregation. This chain is Dermonecrotic toxin SdSicTox-betaIIB1biv, found in Sicarius cf. damarensis (strain GJB-2008) (Six-eyed sand spider).